The following is a 369-amino-acid chain: Cytochrome P450 monooxygenase apf8 (369 aa).

C303 is a binding site for heme.

Belongs to the cytochrome P450 family. Heme is required as a cofactor.

Its pathway is secondary metabolite biosynthesis. In terms of biological role, cytochrome P450 monooxygenase; part of the gene cluster that mediates the biosynthesis of the cyclic tetrapeptide apicidin F (APF). The non-ribosomal peptide synthetase apf1 incorporates four different amino acids to produce apicidin F: L-phenylalanine, D-pipecolic acid (D-pip), N-methoxy-L-tryptophan and L-2-aminooctanedioic acid. L-Phenylalanine is the only proteinogenic amino acid directly used by apf1. The 3 other apf1 substrates are non-proteinogenic and have to be modified by other enzymes of the cluster. Lysine is converted to delta-1-pyrroline-5-carboxylate (P5C) which is reduced to L-pipecolic acid (L-pip) by apf3. L-pip is epimerized to D-pip, probably by apf1 activity, prior to incorporation. L-Tryptophan is N-oxidyzed by one of the cytochrome P450 monooxygenases (apf7 or apf8), and further methylated at the hydroxy group by the O-methyltransferase apf6 to yield N-methoxy-L-tryptophan. The synthesis of the fourth apf1 substrate is more complex. The fatty acid synthase apf5 is involved in the synthesis of the octanoic acid backbone of L-2-aminooctanedioic acid by fixing one acetyl-CoA unit and three malonyl-CoA units. Then one of the cytochrome P450 monooxygenases (apf7 or apf8) may oxidize this backbone to 2-oxooctanoic acid. The aminotransferase apf4 is predicted to catalyze the exchange of the keto group with an amino group. The next step would be the oxidation of 2-aminooctanoic acid by one of the cytochrome P450 monooxygenases (apf7 or apf8). The last step is the oxidation of 2-amino-8-hydroxyoctanoic acid to 2-aminooctanedioic acid is catalyzed by the FAD-dependent monooxygenase apf9. This Gibberella fujikuroi (strain CBS 195.34 / IMI 58289 / NRRL A-6831) (Bakanae and foot rot disease fungus) protein is Cytochrome P450 monooxygenase apf8.